The primary structure comprises 374 residues: Carbamoyl phosphate synthase small chain (374 aa).

Positions 1 to 185 (MKAILALEDG…DVSSGYKWSD (185 aa)) are CPSase. L-glutamine contacts are provided by Ser45, Gly237, and Gly239. In terms of domain architecture, Glutamine amidotransferase type-1 spans 189–374 (RLVLVDYGVK…RNLVKDATGK (186 aa)). Cys264 functions as the Nucleophile in the catalytic mechanism. Residues Leu265, Gln268, Asn306, Gly308, and Phe309 each coordinate L-glutamine. Active-site residues include His347 and Glu349.

It belongs to the CarA family. As to quaternary structure, composed of two chains; the small (or glutamine) chain promotes the hydrolysis of glutamine to ammonia, which is used by the large (or ammonia) chain to synthesize carbamoyl phosphate. Tetramer of heterodimers (alpha,beta)4.

It carries out the reaction hydrogencarbonate + L-glutamine + 2 ATP + H2O = carbamoyl phosphate + L-glutamate + 2 ADP + phosphate + 2 H(+). It catalyses the reaction L-glutamine + H2O = L-glutamate + NH4(+). It participates in amino-acid biosynthesis; L-arginine biosynthesis; carbamoyl phosphate from bicarbonate: step 1/1. The protein operates within pyrimidine metabolism; UMP biosynthesis via de novo pathway; (S)-dihydroorotate from bicarbonate: step 1/3. Small subunit of the glutamine-dependent carbamoyl phosphate synthetase (CPSase). CPSase catalyzes the formation of carbamoyl phosphate from the ammonia moiety of glutamine, carbonate, and phosphate donated by ATP, constituting the first step of 2 biosynthetic pathways, one leading to arginine and/or urea and the other to pyrimidine nucleotides. The small subunit (glutamine amidotransferase) binds and cleaves glutamine to supply the large subunit with the substrate ammonia. This is Carbamoyl phosphate synthase small chain from Maridesulfovibrio salexigens (strain ATCC 14822 / DSM 2638 / NCIMB 8403 / VKM B-1763) (Desulfovibrio salexigens).